The chain runs to 129 residues: 3-oxo-4,17-pregnadiene-20-carboxyl-CoA hydratase beta subunit (129 aa).

This sequence belongs to the thioester dehydratase family. As to quaternary structure, heterodimer composed of ChsH1 and ChsH2. Two heterodimers combine to form a heterotetramer. The complex interacts with Ltp2 via the DUF35 C-terminal region of ChsH2. The ChsH1-ChsH2-Ltp2 protein complex is composed of two protomers that form a heterohexameric structure through the Ltp2 dimerization interface.

The enzyme catalyses 3-oxochola-4,17-dien-22-oyl-CoA + H2O = 17-hydroxy-3-oxochol-4-en-22-oyl-CoA. The catalysed reaction is (2E)-octenoyl-CoA + H2O = 3-hydroxyoctanoyl-CoA. It carries out the reaction (2E)-decenoyl-CoA + H2O = 3-hydroxydecanoyl-CoA. Its pathway is steroid metabolism; cholesterol degradation. In the absence of the Ltp2 aldolase, ChsH1/ChsH2 can hydrate only about 30% of the 3-OPDC-CoA substrate. Complete turnover requires the presence of Ltp2. Involved in cholesterol side chain degradation. Catalyzes the hydration of 3-oxo-4,17-pregnadiene-20-carboxyl-CoA (3-OPDC-CoA) to form 17-hydroxy-3-oxo-4-pregnene-20-carboxyl-CoA (17-HOPC-CoA), in the modified beta-oxidation pathway for cholesterol side chain degradation. Can also use octenoyl-CoA and decenoyl-CoA, with lower efficiency. The polypeptide is 3-oxo-4,17-pregnadiene-20-carboxyl-CoA hydratase beta subunit (Mycobacterium tuberculosis (strain ATCC 25618 / H37Rv)).